A 340-amino-acid polypeptide reads, in one-letter code: Sterol-4-alpha-carboxylate 3-dehydrogenase erg26, decarboxylating (340 aa).

Tyr-144 (proton acceptor) is an active-site residue. Lys-148 lines the NAD(+) pocket.

Belongs to the 3-beta-HSD family. As to quaternary structure, heterotetramer of erg25, erg26, erg27 and erg28. Erg28 acts as a scaffold to tether erg27 and other 4,4-demethylation-related enzymes, forming a demethylation enzyme complex, in the endoplasmic reticulum.

It is found in the endoplasmic reticulum membrane. It carries out the reaction 4beta-methylzymosterol-4alpha-carboxylate + NADP(+) = 3-dehydro-4-methylzymosterol + CO2 + NADPH. The protein operates within steroid biosynthesis; zymosterol biosynthesis; zymosterol from lanosterol: step 4/6. It participates in steroid metabolism; ergosterol biosynthesis. In terms of biological role, sterol-4-alpha-carboxylate 3-dehydrogenase; part of the third module of ergosterol biosynthesis pathway that includes by the late steps of the pathway. Erg26 is a catalytic component of the C-4 demethylation complex that catalyzes the oxidative decarboxylation that results in a reduction of the 3-beta-hydroxy group at the C-3 carbon to an oxo group. The third module or late pathway involves the ergosterol synthesis itself through consecutive reactions that mainly occur in the endoplasmic reticulum (ER) membrane. Firstly, the squalene synthase erg9 catalyzes the condensation of 2 farnesyl pyrophosphate moieties to form squalene, which is the precursor of all steroids. Secondly, squalene is converted into lanosterol by the consecutive action of the squalene epoxidase erg1 and the lanosterol synthase erg7. The lanosterol 14-alpha-demethylase erg11/cyp1 catalyzes C14-demethylation of lanosterol to produce 4,4'-dimethyl cholesta-8,14,24-triene-3-beta-ol. In the next steps, a complex process involving various demethylation, reduction and desaturation reactions catalyzed by the C-14 reductase erg24 and the C-4 demethylation complex erg25-erg26-erg27 leads to the production of zymosterol. Erg28 likely functions in the C-4 demethylation complex reaction by tethering erg26 and Erg27 to the endoplasmic reticulum or to facilitate interaction between these proteins. Then, the sterol 24-C-methyltransferase erg6 catalyzes the methyl transfer from S-adenosyl-methionine to the C-24 of zymosterol to form fecosterol. The C-8 sterol isomerase erg2 catalyzes the reaction which results in unsaturation at C-7 in the B ring of sterols and thus converts fecosterol to episterol. The sterol-C5-desaturases erg31 and erg32 then catalyze the introduction of a C-5 double bond in the B ring to produce 5-dehydroepisterol. The C-22 sterol desaturase erg5 further converts 5-dehydroepisterol into ergosta-5,7,22,24(28)-tetraen-3beta-ol by forming the C-22(23) double bond in the sterol side chain. Finally, ergosta-5,7,22,24(28)-tetraen-3beta-ol is substrate of the C-24(28) sterol reductase erg4 to produce ergosterol. In the genus Schizosaccharomyces, a second route exists between lanosterol and fecosterol, via the methylation of lanosterol to eburicol by erg6, followed by C14-demethylation by erg11/cyp1 and C4-demethylation by the demethylation complex erg25-erg26-erg27. This is Sterol-4-alpha-carboxylate 3-dehydrogenase erg26, decarboxylating from Schizosaccharomyces pombe (strain 972 / ATCC 24843) (Fission yeast).